The following is a 102-amino-acid chain: MAGQKIRIRLKSYDHEVIDVSARKIVDTVTRAGATVVGPVPLPTEKNVYCVIRSPHKYKDSREHFEMRTHKRLIDIIDPTPKAVDSLMRLDLPADVNIEIKL.

This sequence belongs to the universal ribosomal protein uS10 family. Part of the 30S ribosomal subunit.

Its function is as follows. Involved in the binding of tRNA to the ribosomes. In Micrococcus luteus (strain ATCC 4698 / DSM 20030 / JCM 1464 / CCM 169 / CCUG 5858 / IAM 1056 / NBRC 3333 / NCIMB 9278 / NCTC 2665 / VKM Ac-2230) (Micrococcus lysodeikticus), this protein is Small ribosomal subunit protein uS10.